A 657-amino-acid chain; its full sequence is Hemocyanin (657 aa).

Residue asparagine 167 is glycosylated (N-linked (GlcNAc...) asparagine). 6 residues coordinate Cu cation: histidine 194, histidine 198, histidine 224, histidine 344, histidine 348, and histidine 384. 2 cysteine pairs are disulfide-bonded: cysteine 483–cysteine 502 and cysteine 562–cysteine 609.

It belongs to the tyrosinase family. Hemocyanin subfamily. It consists of at least four very similar subunits. As to expression, hemolymph.

Its subcellular location is the secreted. It localises to the extracellular space. Its function is as follows. Hemocyanins are copper-containing oxygen carriers occurring freely dissolved in the hemolymph of many mollusks and arthropods. The chain is Hemocyanin from Palinurus vulgaris (European spiny lobster).